The sequence spans 395 residues: S-adenosylmethionine synthase (395 aa).

Histidine 15 provides a ligand contact to ATP. A Mg(2+)-binding site is contributed by aspartate 17. Residue glutamate 43 coordinates K(+). Glutamine 99 serves as a coordination point for L-methionine. Residues 99 to 109 (QSPDIAMGVNE) are flexible loop. ATP-binding positions include 174–176 (DGK), 240–241 (RF), aspartate 249, 255–256 (RK), alanine 272, and lysine 276. Aspartate 249 serves as a coordination point for L-methionine. Lysine 280 is a binding site for L-methionine.

It belongs to the AdoMet synthase family. In terms of assembly, homotetramer; dimer of dimers. It depends on Mg(2+) as a cofactor. Requires K(+) as cofactor.

The protein localises to the cytoplasm. The enzyme catalyses L-methionine + ATP + H2O = S-adenosyl-L-methionine + phosphate + diphosphate. The protein operates within amino-acid biosynthesis; S-adenosyl-L-methionine biosynthesis; S-adenosyl-L-methionine from L-methionine: step 1/1. Functionally, catalyzes the formation of S-adenosylmethionine (AdoMet) from methionine and ATP. The overall synthetic reaction is composed of two sequential steps, AdoMet formation and the subsequent tripolyphosphate hydrolysis which occurs prior to release of AdoMet from the enzyme. The polypeptide is S-adenosylmethionine synthase (Moorella thermoacetica (strain ATCC 39073 / JCM 9320)).